A 506-amino-acid polypeptide reads, in one-letter code: Maturase K (506 aa).

Belongs to the intron maturase 2 family. MatK subfamily.

It localises to the plastid. It is found in the chloroplast. Its function is as follows. Usually encoded in the trnK tRNA gene intron. Probably assists in splicing its own and other chloroplast group II introns. The sequence is that of Maturase K from Sullivantia sullivantii (Sullivant's coolwort).